Here is a 226-residue protein sequence, read N- to C-terminus: Ribonuclease 3 (226 aa).

In terms of domain architecture, RNase III spans Ile6–Asp128. Glu41 provides a ligand contact to Mg(2+). Asp45 is a catalytic residue. Asp114 and Glu117 together coordinate Mg(2+). The active site involves Glu117. The 71-residue stretch at Asp155–Leu225 folds into the DRBM domain.

This sequence belongs to the ribonuclease III family. As to quaternary structure, homodimer. Mg(2+) is required as a cofactor.

It localises to the cytoplasm. It catalyses the reaction Endonucleolytic cleavage to 5'-phosphomonoester.. Digests double-stranded RNA. Involved in the processing of primary rRNA transcript to yield the immediate precursors to the large and small rRNAs (23S and 16S). Processes some mRNAs, and tRNAs when they are encoded in the rRNA operon. Processes pre-crRNA and tracrRNA of type II CRISPR loci if present in the organism. This Yersinia enterocolitica serotype O:8 / biotype 1B (strain NCTC 13174 / 8081) protein is Ribonuclease 3.